We begin with the raw amino-acid sequence, 370 residues long: Queuine tRNA-ribosyltransferase (370 aa).

The Proton acceptor role is filled by Asp-89. Residues 89–93 (DSGGF), Asp-143, Gln-187, and Gly-214 contribute to the substrate site. The segment at 245–251 (GVGTPED) is RNA binding. Catalysis depends on Asp-264, which acts as the Nucleophile. The interval 269–273 (TRNAR) is RNA binding; important for wobble base 34 recognition. Residues Cys-302, Cys-304, Cys-307, and His-333 each contribute to the Zn(2+) site.

Belongs to the queuine tRNA-ribosyltransferase family. In terms of assembly, homodimer. Within each dimer, one monomer is responsible for RNA recognition and catalysis, while the other monomer binds to the replacement base PreQ1. The cofactor is Zn(2+).

It carries out the reaction 7-aminomethyl-7-carbaguanine + guanosine(34) in tRNA = 7-aminomethyl-7-carbaguanosine(34) in tRNA + guanine. Its pathway is tRNA modification; tRNA-queuosine biosynthesis. Functionally, catalyzes the base-exchange of a guanine (G) residue with the queuine precursor 7-aminomethyl-7-deazaguanine (PreQ1) at position 34 (anticodon wobble position) in tRNAs with GU(N) anticodons (tRNA-Asp, -Asn, -His and -Tyr). Catalysis occurs through a double-displacement mechanism. The nucleophile active site attacks the C1' of nucleotide 34 to detach the guanine base from the RNA, forming a covalent enzyme-RNA intermediate. The proton acceptor active site deprotonates the incoming PreQ1, allowing a nucleophilic attack on the C1' of the ribose to form the product. After dissociation, two additional enzymatic reactions on the tRNA convert PreQ1 to queuine (Q), resulting in the hypermodified nucleoside queuosine (7-(((4,5-cis-dihydroxy-2-cyclopenten-1-yl)amino)methyl)-7-deazaguanosine). In Aromatoleum aromaticum (strain DSM 19018 / LMG 30748 / EbN1) (Azoarcus sp. (strain EbN1)), this protein is Queuine tRNA-ribosyltransferase.